The following is a 466-amino-acid chain: Nuclear pore complex protein Nup50 (466 aa).

A compositionally biased stretch (basic and acidic residues) spans 1–14; the sequence is MAKRVAEKELTDRN. A disordered region spans residues 1–22; that stretch reads MAKRVAEKELTDRNWDEEDEVE. Lys8 carries the N6-acetyllysine modification. Ser52 is subject to Phosphoserine. Residues 76–77 form repeat 1; that stretch reads FG. The interval 76–302 is 5 X 2 AA repeats of F-G; the sequence is FGGSGGKPLE…FSAGSSSLFG (227 aa). N6-acetyllysine is present on Lys82. Repeat unit 2 spans residues 112–113; it reads FG. Lys126 is modified (N6-acetyllysine). Disordered stretches follow at residues 128–150 and 200–257; these read ISSP…STAC and LENG…AEKK. Positions 131-150 are enriched in polar residues; that stretch reads PKCNNSNQPPSSGPASSTAC. The tract at residues 143–205 is binding to CDKN1B; sequence GPASSTACPG…IEKQLENGGG (63 aa). Position 208 is a phosphoserine (Ser208). The stretch at 225–226 is repeat 3; that stretch reads FG. A compositionally biased stretch (polar residues) spans 225–235; it reads FGSTKLQQESP. Position 234 is a phosphoserine (Ser234). The segment covering 241-257 has biased composition (basic and acidic residues); it reads NKAEDTSEKVEFTAEKK. Thr246 carries the phosphothreonine modification. Position 268 is a phosphoserine (Ser268). Repeat unit 4 spans residues 271-272; sequence FG. Ser294 is modified (phosphoserine). Residues 301–302 form repeat 5; it reads FG. Residues 316–343 form a disordered region; it reads SAKASESPAGGGSSECRDGEEEENDEPP. A RanBD1 domain is found at 333–466; it reads DGEEEENDEP…HKILLEKKDA (134 aa). Lys351 participates in a covalent cross-link: Glycyl lysine isopeptide (Lys-Gly) (interchain with G-Cter in SUMO2). Lys448 bears the N6-acetyllysine mark.

In terms of assembly, does not interact with TPR. Interacts with Importin alpha-2, Importin beta, Importin beta-2, NUP153, Ran binding protein 7, CDKN1B and itself. As to expression, widely expressed at low levels. Highest in the developing neural tube and adult testes.

The protein localises to the nucleus. The protein resides in the nuclear pore complex. It is found in the nucleus membrane. Functionally, component of the nuclear pore complex that has a direct role in nuclear protein import. Actively displaces NLSs from importin-alpha, and facilitates disassembly of the importin-alpha:beta-cargo complex and importin recycling. Interacts with regulatory proteins of cell cycle progression including CDKN1B. This interaction is required for correct intracellular transport and degradation of CDKN1B. The sequence is that of Nuclear pore complex protein Nup50 (Nup50) from Mus musculus (Mouse).